The following is a 1463-amino-acid chain: Secretory phospholipase A2 receptor (1463 aa).

The signal sequence occupies residues 1 to 20; sequence MPLLSLSLLLLLLQVPAGSA. Over 21 to 1392 the chain is Extracellular; the sequence is ETAAWAVTPE…IHTVKKHPGK (1372 aa). The Ricin B-type lectin domain maps to 38–115; sequence KGIFIIQSEN…CDSTHVSLKW (78 aa). The N-linked (GlcNAc...) asparagine glycan is linked to N93. Residues 173–221 enclose the Fibronectin type-II domain; it reads AHGTPCMFPFQYNQQWHHECTREGREDNLLWCATTSRYERDEKWGFCPD. Intrachain disulfides connect C178–C204, C192–C219, C260–C354, C330–C346, C406–C501, C478–C493, C617–C634, C699–C796, C774–C788, C840–C938, C915–C930, C992–C1096, C1068–C1088, C1209–C1223, C1280–C1377, and C1354–C1369. 8 C-type lectin domains span residues 229–353, 357–500, 504–641, 646–795, 799–937, 941–1095, 1099–1230, and 1235–1376; these read CDAV…LPYV, YLNP…LFYL, TGLV…KAMS, PVEN…REWI, PRDV…MPSI, KKVW…YGFV, MQDA…LQGA, and PTET…KGFI. A glycan (N-linked (GlcNAc...) asparagine) is linked at N454. N1057 carries N-linked (GlcNAc...) asparagine glycosylation. Residues 1393 to 1421 form a helical membrane-spanning segment; that stretch reads GPSHSVIPLTVALTLLVILAISTLSFCMY. Residues 1422–1463 lie on the Cytoplasmic side of the membrane; that stretch reads KHSHIIFGRLAQFRNPYYPSANFSTVHLEENILISDLEKNDQ. Residues 1436 to 1442 carry the Endocytosis signal motif; it reads NPYYPSA.

In terms of assembly, interacts with sPLA2-IB/PLA2G1B; this interaction mediates intracellular signaling as well as clearance of extracellular sPLA2-IB/PLA2G1B via endocytotic pathway. Interacts with sPLA2-X/PLA2G10; this interaction mediates sPLA2-X/PLA2G10 clearance and inactivation. In terms of processing, the secretory phospholipase A2 receptor form may be produced by the action of metalloproteinases. It contains all extracellular domains and only lacks transmembrane and cytosolic regions. It is however unclear whether this form is produced by proteolytic cleavage as suggested by some experiments, or by alternative splicing.

It is found in the cell membrane. Its subcellular location is the secreted. Its function is as follows. Receptor for secretory phospholipase A2 (sPLA2). Also able to bind to snake PA2-like toxins. Although its precise function remains unclear, binding of sPLA2 to its receptor participates in both positive and negative regulation of sPLA2 functions as well as clearance of sPLA2. Binding of sPLA2-IB/PLA2G1B induces various effects depending on the cell type, such as activation of the mitogen-activated protein kinase (MAPK) cascade to induce cell proliferation, the production of lipid mediators, selective release of arachidonic acid in bone marrow-derived mast cells. In neutrophils, binding of sPLA2-IB/PLA2G1B can activate p38 MAPK to stimulate elastase release and cell adhesion. May be involved in responses in pro-inflammatory cytokine productions during endotoxic shock. Also has endocytic properties and rapidly internalizes sPLA2 ligands, which is particularly important for the clearance of extracellular sPLA2s to protect their potent enzymatic activities. The soluble secretory phospholipase A2 receptor form is circulating and acts as a negative regulator of sPLA2 functions by blocking the biological functions of sPLA2-IB/PLA2G1B and sPLA2-X/PLA2G10. The protein is Secretory phospholipase A2 receptor (PLA2R1) of Bos taurus (Bovine).